A 273-amino-acid polypeptide reads, in one-letter code: 4-hydroxy-tetrahydrodipicolinate reductase (273 aa).

NAD(+) is bound by residues 12–17 (GAGGRM) and Glu-38. Arg-39 is a binding site for NADP(+). NAD(+)-binding positions include 102-104 (GTT) and 126-129 (AANF). Residue His-159 is the Proton donor/acceptor of the active site. Position 160 (His-160) interacts with (S)-2,3,4,5-tetrahydrodipicolinate. Residue Lys-163 is the Proton donor of the active site. Residue 169-170 (GT) participates in (S)-2,3,4,5-tetrahydrodipicolinate binding.

The protein belongs to the DapB family. Homotetramer.

The protein resides in the cytoplasm. It catalyses the reaction (S)-2,3,4,5-tetrahydrodipicolinate + NAD(+) + H2O = (2S,4S)-4-hydroxy-2,3,4,5-tetrahydrodipicolinate + NADH + H(+). The catalysed reaction is (S)-2,3,4,5-tetrahydrodipicolinate + NADP(+) + H2O = (2S,4S)-4-hydroxy-2,3,4,5-tetrahydrodipicolinate + NADPH + H(+). It functions in the pathway amino-acid biosynthesis; L-lysine biosynthesis via DAP pathway; (S)-tetrahydrodipicolinate from L-aspartate: step 4/4. Its function is as follows. Catalyzes the conversion of 4-hydroxy-tetrahydrodipicolinate (HTPA) to tetrahydrodipicolinate. The polypeptide is 4-hydroxy-tetrahydrodipicolinate reductase (Escherichia fergusonii (strain ATCC 35469 / DSM 13698 / CCUG 18766 / IAM 14443 / JCM 21226 / LMG 7866 / NBRC 102419 / NCTC 12128 / CDC 0568-73)).